The primary structure comprises 370 residues: Aminomethyltransferase (370 aa).

The protein belongs to the GcvT family. The glycine cleavage system is composed of four proteins: P, T, L and H.

It catalyses the reaction N(6)-[(R)-S(8)-aminomethyldihydrolipoyl]-L-lysyl-[protein] + (6S)-5,6,7,8-tetrahydrofolate = N(6)-[(R)-dihydrolipoyl]-L-lysyl-[protein] + (6R)-5,10-methylene-5,6,7,8-tetrahydrofolate + NH4(+). Its function is as follows. The glycine cleavage system catalyzes the degradation of glycine. The sequence is that of Aminomethyltransferase from Clostridium botulinum (strain 657 / Type Ba4).